A 52-amino-acid chain; its full sequence is MKLTHVLIVAVLVLTVCHLTMAVCKSGGQACWFLLKKHNCCSGYCIVAVCAG.

An N-terminal signal peptide occupies residues 1–22 (MKLTHVLIVAVLVLTVCHLTMA). Cystine bridges form between Cys-24/Cys-41, Cys-31/Cys-45, and Cys-40/Cys-50.

In terms of tissue distribution, expressed by the venom duct.

It is found in the secreted. In terms of biological role, probable neurotoxin. The sequence is that of Conotoxin Cal6.25 from Californiconus californicus (California cone).